The following is a 224-amino-acid chain: tRNA (guanine-N(7)-)-methyltransferase (224 aa).

Glutamate 45, glutamate 70, aspartate 97, and aspartate 119 together coordinate S-adenosyl-L-methionine. Residue aspartate 119 is part of the active site. Residues lysine 123, aspartate 155, and 199–202 (TEYE) contribute to the substrate site.

The protein belongs to the class I-like SAM-binding methyltransferase superfamily. TrmB family.

It catalyses the reaction guanosine(46) in tRNA + S-adenosyl-L-methionine = N(7)-methylguanosine(46) in tRNA + S-adenosyl-L-homocysteine. It participates in tRNA modification; N(7)-methylguanine-tRNA biosynthesis. Catalyzes the formation of N(7)-methylguanine at position 46 (m7G46) in tRNA. In Ureaplasma urealyticum serovar 10 (strain ATCC 33699 / Western), this protein is tRNA (guanine-N(7)-)-methyltransferase.